The primary structure comprises 274 residues: MGTLTVNQNKLQKRLRRQAGEAVADFNMIEEGDKVMVCLSGGKDSYTMLDVLLHLQKVAPIKFEIVAVNMDQKQPGFPEHVLPAYLKELGIEYHIVEKDTYSVVKELIPEGKTTCSLCSRLRRGTLYTFADEIGATKMALGHHRDDIVETFFLNMFYNGSLKAMPPKLLADDGRNVVIRPLAYCSEKDIQAYSDLKQFPIIPCNLCGSQENLQRQVVKEMLQEWERKTPGRTESIFRGLQNVIPSQLADRNLFDFTSLRIDDSATPRFVNVVNL.

Residues 40 to 45 (SGGKDS) carry the PP-loop motif motif. [4Fe-4S] cluster contacts are provided by C115, C118, and C206.

It belongs to the TtcA family. Homodimer. The cofactor is Mg(2+). Requires [4Fe-4S] cluster as cofactor.

The protein resides in the cytoplasm. The enzyme catalyses cytidine(32) in tRNA + S-sulfanyl-L-cysteinyl-[cysteine desulfurase] + AH2 + ATP = 2-thiocytidine(32) in tRNA + L-cysteinyl-[cysteine desulfurase] + A + AMP + diphosphate + H(+). The protein operates within tRNA modification. Its function is as follows. Catalyzes the ATP-dependent 2-thiolation of cytidine in position 32 of tRNA, to form 2-thiocytidine (s(2)C32). The sulfur atoms are provided by the cysteine/cysteine desulfurase (IscS) system. In Pseudomonas fluorescens (strain ATCC BAA-477 / NRRL B-23932 / Pf-5), this protein is tRNA-cytidine(32) 2-sulfurtransferase.